Here is a 352-residue protein sequence, read N- to C-terminus: Quinolinate synthase (352 aa).

Iminosuccinate contacts are provided by histidine 48 and serine 69. [4Fe-4S] cluster is bound at residue cysteine 114. Residues 140 to 142 (YAN) and serine 157 contribute to the iminosuccinate site. Cysteine 201 provides a ligand contact to [4Fe-4S] cluster. Iminosuccinate is bound by residues 227 to 229 (HPE) and threonine 244. Cysteine 298 lines the [4Fe-4S] cluster pocket.

It belongs to the quinolinate synthase family. Type 1 subfamily. Requires [4Fe-4S] cluster as cofactor.

It is found in the cytoplasm. It carries out the reaction iminosuccinate + dihydroxyacetone phosphate = quinolinate + phosphate + 2 H2O + H(+). It functions in the pathway cofactor biosynthesis; NAD(+) biosynthesis; quinolinate from iminoaspartate: step 1/1. Functionally, catalyzes the condensation of iminoaspartate with dihydroxyacetone phosphate to form quinolinate. The protein is Quinolinate synthase of Pseudomonas putida (strain GB-1).